Here is a 511-residue protein sequence, read N- to C-terminus: Coatomer subunit delta (511 aa).

A compositionally biased stretch (basic and acidic residues) spans 168–177 (QARRDAERQG). Residues 168-188 (QARRDAERQGKKAPGFGGFGS) are disordered. The residue at position 223 (serine 223) is a Phosphoserine. 2 positions are modified to N6-acetyllysine: lysine 233 and lysine 241. A Phosphoserine modification is found at serine 244. Residues 271–511 (MESVHMKIEE…TFLVDKYEIL (241 aa)) enclose the MHD domain. Residues lysine 309 and lysine 351 each carry the N6-acetyllysine modification. Serine 493 bears the Phosphoserine mark.

It belongs to the adaptor complexes medium subunit family. Delta-COP subfamily. As to quaternary structure, oligomeric complex that consists of at least the alpha, beta, beta', gamma, delta, epsilon and zeta subunits. As to expression, ubiquitously expressed.

It is found in the cytoplasm. Its subcellular location is the golgi apparatus membrane. It localises to the cytoplasmic vesicle. The protein resides in the COPI-coated vesicle membrane. Functionally, component of the coatomer, a cytosolic protein complex that binds to dilysine motifs and reversibly associates with Golgi non-clathrin-coated vesicles, which further mediate biosynthetic protein transport from the ER, via the Golgi up to the trans Golgi network. The coatomer complex is required for budding from Golgi membranes, and is essential for the retrograde Golgi-to-ER transport of dilysine-tagged proteins. In mammals, the coatomer can only be recruited by membranes associated to ADP-ribosylation factors (ARFs), which are small GTP-binding proteins; the complex also influences the Golgi structural integrity, as well as the processing, activity, and endocytic recycling of LDL receptors. The sequence is that of Coatomer subunit delta (ARCN1) from Homo sapiens (Human).